Reading from the N-terminus, the 260-residue chain is UPF0246 protein Bxeno_A1262 (260 aa).

It belongs to the UPF0246 family.

The chain is UPF0246 protein Bxeno_A1262 from Paraburkholderia xenovorans (strain LB400).